The following is an 86-amino-acid chain: Probable acyl carrier protein CCNA_01221 (86 aa).

Residues 6-83 (TVTDLSLREI…DLSKLINDLR (78 aa)) enclose the Carrier domain. Serine 43 is subject to O-(pantetheine 4'-phosphoryl)serine.

The protein belongs to the acyl carrier protein (ACP) family.

It participates in lipid metabolism; sphingolipid metabolism. In terms of biological role, involved in de novo bacterial ceramide synthesis. The protein is Probable acyl carrier protein CCNA_01221 of Caulobacter vibrioides (strain NA1000 / CB15N) (Caulobacter crescentus).